The primary structure comprises 204 residues: LexA repressor (204 aa).

A DNA-binding region (H-T-H motif) is located at residues 30 to 50; that stretch reads IREICQGVGLSSPSTVHHHLK. Active-site for autocatalytic cleavage activity residues include Ser125 and Lys162.

The protein belongs to the peptidase S24 family. As to quaternary structure, homodimer.

It carries out the reaction Hydrolysis of Ala-|-Gly bond in repressor LexA.. In terms of biological role, represses a number of genes involved in the response to DNA damage (SOS response), including recA and lexA. In the presence of single-stranded DNA, RecA interacts with LexA causing an autocatalytic cleavage which disrupts the DNA-binding part of LexA, leading to derepression of the SOS regulon and eventually DNA repair. In Carboxydothermus hydrogenoformans (strain ATCC BAA-161 / DSM 6008 / Z-2901), this protein is LexA repressor.